The chain runs to 680 residues: Oligopeptidase A (680 aa).

A Zn(2+)-binding site is contributed by His469. Glu470 is a catalytic residue. Zn(2+)-binding residues include His473 and His476.

It belongs to the peptidase M3 family. The cofactor is Zn(2+).

The catalysed reaction is Hydrolysis of oligopeptides, with broad specificity. Gly or Ala commonly occur as P1 or P1' residues, but more distant residues are also important, as is shown by the fact that Z-Gly-Pro-Gly-|-Gly-Pro-Ala is cleaved, but not Z-(Gly)(5).. In terms of biological role, may play a specific role in the degradation of signal peptides after they are released from precursor forms of secreted proteins. Can cleave N-acetyl-L-Ala(4). The protein is Oligopeptidase A (prlC) of Salmonella typhimurium (strain LT2 / SGSC1412 / ATCC 700720).